Here is a 71-residue protein sequence, read N- to C-terminus: uncharacterized protein (71 aa).

This is an uncharacterized protein from Dictyostelium discoideum (Social amoeba).